Here is a 312-residue protein sequence, read N- to C-terminus: Undecaprenyl-diphosphatase (312 aa).

Helical transmembrane passes span 74–94, 122–142, 154–174, 183–203, 226–246, 254–274, and 288–308; these read GVAFTAVIQLGSIVSIVWYFW, VSIGLGTIPIVFFGLLIKVFI, VAIAIASIIMALLLVIAERIG, LDIRDGIVIGLAQVLALIPGV, FSFLLGLPAITLAGLVELKTL, VGLVATLTGVFSAIIFSYIAI, and IFIWYRLAFGILILIGIISGV.

It belongs to the UppP family.

Its subcellular location is the cell inner membrane. It carries out the reaction di-trans,octa-cis-undecaprenyl diphosphate + H2O = di-trans,octa-cis-undecaprenyl phosphate + phosphate + H(+). Its function is as follows. Catalyzes the dephosphorylation of undecaprenyl diphosphate (UPP). Confers resistance to bacitracin. In Trichodesmium erythraeum (strain IMS101), this protein is Undecaprenyl-diphosphatase.